The primary structure comprises 184 residues: Probable cobalt-precorrin-6B C(15)-methyltransferase (decarboxylating) (184 aa).

S-adenosyl-L-methionine contacts are provided by residues Thr12, 36-40, Asp59, and Ala87; that span reads GCGTG.

It belongs to the methyltransferase superfamily. Archaeal-type CbiT family.

It carries out the reaction Co-precorrin-6B + S-adenosyl-L-methionine = Co-precorrin-7 + S-adenosyl-L-homocysteine + CO2. Its pathway is cofactor biosynthesis; adenosylcobalamin biosynthesis; cob(II)yrinate a,c-diamide from sirohydrochlorin (anaerobic route): step 8/10. Functionally, catalyzes the methylation of C-15 in cobalt-precorrin-6B followed by the decarboxylation of C-12 to form cobalt-precorrin-7. In Methanosarcina acetivorans (strain ATCC 35395 / DSM 2834 / JCM 12185 / C2A), this protein is Probable cobalt-precorrin-6B C(15)-methyltransferase (decarboxylating).